The chain runs to 542 residues: Chaperonin GroEL 2 (542 aa).

Residues 29 to 32, 86 to 90, G413, 477 to 479, and D493 each bind ATP; these read TLGP, DGTTT, and NAA.

It belongs to the chaperonin (HSP60) family. Forms a cylinder of 14 subunits composed of two heptameric rings stacked back-to-back. Interacts with the co-chaperonin GroES.

It is found in the cytoplasm. The enzyme catalyses ATP + H2O + a folded polypeptide = ADP + phosphate + an unfolded polypeptide.. Functionally, together with its co-chaperonin GroES, plays an essential role in assisting protein folding. The GroEL-GroES system forms a nano-cage that allows encapsulation of the non-native substrate proteins and provides a physical environment optimized to promote and accelerate protein folding. The polypeptide is Chaperonin GroEL 2 (Kineococcus radiotolerans (strain ATCC BAA-149 / DSM 14245 / SRS30216)).